The chain runs to 1376 residues: MAQTFTGRKRIRKFFGKIKEVAEMPNLIEVQKASYDQFLQIEEPKGGRADDGLQAVFKSVFPISDFSGAAMLEFVRYEFEPPKYDVDECRQRGMTFAAPLKVTLRLIVFDVDPDTGAKSVKDIKEQDVYTGDIPLMTMNGTFIVNGTERVIVSQMHRSPGVFFDHDKGKTHSSGKLLFAARIIPYRGSWLDIEFDAKDIVYARIDRRRKIPVTSLLFALGLDSEEILNTFYEKILYTRAKDGWRMPFDPKRMKGYKAVADLIDADTGEVVVEAGKKLTVRAARQLVEKGLKALKISDDEMVGQYIGEDIVNVHTGEIYAEAGEEITEKVLKTLGDAGFDEIPVLDIDHINTGAYIRNTLSADKNSSREEALFDIYRVMRPGEPPTLDSAQAMFHSLFFDAERYDLSAVGRVKMNMRLDLDAEDTVRILRREDILAVIKTLVELRDGKGEIDDIDHLGNRRVRSVGELMENQYRVGLLRMERAIKERMSSVDIDTVMPQDLINAKPVAAAVREFFGSSQLSQFMDQTNPLSEITHKRRLSALGPGGLTRERAGFEVRDVHPTHYGRICPIETPEGPNIGLINSLATFARVNKYGFIEAPYRRVVDGRVTDEVVYLSAMEEGKYYVAQANVPLDTDGRFQEDLVICRHAGDVLVVSPDRVDFMDVSPKQLVSVAAALIPFLENDDANRALMGSNMQRQAVPLVRSQAPLVGTGMEAVVARDSGAAIAARRAGVIDQVDATRIVIRATGETDPSKSGVDIYRLMKFQRSNQSTCINQRPLVRVGDVVKKGDIIADGPSTELGELALGRNVLVAFMPWNGYNYEDSILLSENIVKEDVFTSIHIEEFEAMARDTKLGPEEITRDIPNVSEEALKNLDEAGIVYIGAEVRAGDILVGKITPKGESPMTPEEKLLRAIFGEKAADVRDTSLRLPPGTTGTIVEVRVFNRHGVDKDERALAIEREEIERLAKDRDDEQAILDRNVYGRLSEMLVGKVAIAGPKAFKKDTEITKDALGEYPRSQWWLFAVADDALMSELEAIRAQYDESKKRLEQRFLDKVEKLQRGDELPPGVMKMVKVFVAVKRKIQPGDKMAGRHGNKGVVSRIVPVEDMPFLEDGTNVDIVLNPLGVPSRMNVGQILETHLGWACAGLGRQVAAAVDAYYGSKDQQVLRNALVKVYGPDDIEVLDEKQITELGENLRKGVPMATPVFDGAHEADIEEHLEKAGLNPSGQSTLFDGRTGEPFDRKVTVGYIYMLKLHHLVDDKIHARSIGPYSLVTQQPLGGKAQFGGQRFGEMEVWALEAYGAAYTLQEMLTVKSDDVAGRTKVYEAIVRGEDTFESGIPESFNVLVKEMRSLGLNVELLNSKTGRQTNPGTRENLPAAE.

A compositionally biased stretch (polar residues) spans 1357–1368 (NSKTGRQTNPGT). Residues 1357 to 1376 (NSKTGRQTNPGTRENLPAAE) form a disordered region.

The protein belongs to the RNA polymerase beta chain family. In terms of assembly, the RNAP catalytic core consists of 2 alpha, 1 beta, 1 beta' and 1 omega subunit. When a sigma factor is associated with the core the holoenzyme is formed, which can initiate transcription.

It catalyses the reaction RNA(n) + a ribonucleoside 5'-triphosphate = RNA(n+1) + diphosphate. In terms of biological role, DNA-dependent RNA polymerase catalyzes the transcription of DNA into RNA using the four ribonucleoside triphosphates as substrates. The protein is DNA-directed RNA polymerase subunit beta of Azorhizobium caulinodans (strain ATCC 43989 / DSM 5975 / JCM 20966 / LMG 6465 / NBRC 14845 / NCIMB 13405 / ORS 571).